The sequence spans 88 residues: Stannin (88 aa).

The Mitochondrial intermembrane segment spans residues 1 to 10; the sequence is MSIMDHSPTT. The helical transmembrane segment at 11–31 threads the bilayer; it reads GVVTVIVILIAIAALGALILG. At 32–88 the chain is on the cytoplasmic side; sequence CWCYLRLQRISQSEDEESIVGDGETKEPFLLVQYSAKGPCVERKAKLMTPNGPEVHG. S49 carries the phosphoserine modification.

This sequence belongs to the stannin family. Monomer.

It localises to the mitochondrion outer membrane. Its function is as follows. Plays a role in the toxic effects of organotins. Plays a role in endosomal maturation. In Homo sapiens (Human), this protein is Stannin (SNN).